The primary structure comprises 582 residues: Threonine--tRNA ligase (582 aa).

Positions 185 to 478 are catalytic; it reads DHRKLGKELE…LTEQYGGAFP (294 aa). Residues Cys278, His329, and His455 each coordinate Zn(2+).

Belongs to the class-II aminoacyl-tRNA synthetase family. In terms of assembly, homodimer. The cofactor is Zn(2+).

It localises to the cytoplasm. The enzyme catalyses tRNA(Thr) + L-threonine + ATP = L-threonyl-tRNA(Thr) + AMP + diphosphate + H(+). In terms of biological role, catalyzes the attachment of threonine to tRNA(Thr) in a two-step reaction: L-threonine is first activated by ATP to form Thr-AMP and then transferred to the acceptor end of tRNA(Thr). Also edits incorrectly charged L-seryl-tRNA(Thr). In Dehalococcoides mccartyi (strain ATCC BAA-2100 / JCM 16839 / KCTC 5957 / BAV1), this protein is Threonine--tRNA ligase.